A 449-amino-acid polypeptide reads, in one-letter code: Glucose-6-phosphate isomerase (449 aa).

Glutamate 291 serves as the catalytic Proton donor. Catalysis depends on residues histidine 312 and lysine 426.

Belongs to the GPI family.

It is found in the cytoplasm. The catalysed reaction is alpha-D-glucose 6-phosphate = beta-D-fructose 6-phosphate. The protein operates within carbohydrate biosynthesis; gluconeogenesis. It participates in carbohydrate degradation; glycolysis; D-glyceraldehyde 3-phosphate and glycerone phosphate from D-glucose: step 2/4. Catalyzes the reversible isomerization of glucose-6-phosphate to fructose-6-phosphate. This Streptococcus pyogenes serotype M49 (strain NZ131) protein is Glucose-6-phosphate isomerase.